The chain runs to 1148 residues: Envelopment polyprotein (1148 aa).

The signal sequence occupies residues 1–23 (MGELSPVCLYLLLQGLLLCNTGA). Topologically, residues 24–495 (ARNLNELKME…VPGLHGWATM (472 aa)) are lumenal. 6 disulfides stabilise this stretch: Cys34–Cys159, Cys68–Cys165, Cys117–Cys136, Cys141–Cys146, Cys183–Cys193, and Cys218–Cys257. Asn142 carries an N-linked (GlcNAc...) asparagine; by host glycan. N-linked (GlcNAc...) asparagine; by host glycosylation occurs at Asn357. 4 disulfides stabilise this stretch: Cys386/Cys445, Cys390/Cys399, Cys415/Cys434, and Cys462/Cys485. A glycan (N-linked (GlcNAc...) asparagine; by host) is linked at Asn409. A helical membrane pass occupies residues 496–516 (LLLLTFCFGWVLIPTITMILL). Residues 517 to 637 (KILIAFAYLC…LSLFRYRSRF (121 aa)) are Cytoplasmic-facing. Positions 526 to 543 (CSKYNTDSKFRILIEKVK) are binding to the ribonucleoprotein. 2 CCHC-type zinc fingers span residues 555–575 (CEVCQYECETAKELESHRKSC) and 580–601 (CPYCLNPSEATTSALQAHFKVC). 3 binding to the ribonucleoprotein regions span residues 598 to 615 (FKVCKLRSRFQENLRKSL), 602 to 613 (KLRSRFQENLRK), and 621 to 635 (MQGCYRTLSLFRYRS). The ITAM domain maps to 621–644 (MQGCYRTLSLFRYRSRFFVGLVWC). The YxxL motif lies at 625 to 628 (YRTL). A helical transmembrane segment spans residues 638–658 (FVGLVWCVLLVHHLIVWAASA). At 659–1114 (ETQNLNAGWT…EWILGVLNGN (456 aa)) the chain is on the lumenal side. Intrachain disulfides connect Cys745–Cys780, Cys749–Cys787, Cys761–Cys894, Cys775–Cys905, Cys790–Cys913, Cys816–Cys825, Cys833–Cys842, and Cys873–Cys877. Positions 767–787 (YEYETGWGCNPPDCPGVGTGC) are fusion loop. Residue Asn937 is glycosylated (N-linked (GlcNAc...) asparagine; by host). 5 cysteine pairs are disulfide-bonded: Cys979/Cys1009, Cys1002/Cys1054, Cys1019/Cys1024, Cys1055/Cys1060, and Cys1094/Cys1098. The chain crosses the membrane as a helical span at residues 1115–1135 (WMVVAVLVVLLILSILLFTLC). Binding to the ribonucleoprotein stretches follow at residues 1131–1143 (LFTLCCPRRPSYR) and 1131–1148 (LFTLCCPRRPSYRKEHKP). Residues 1136–1148 (CPRRPSYRKEHKP) are Cytoplasmic-facing.

This sequence belongs to the hantavirus envelope glycoprotein family. As to quaternary structure, homodimer. Homotetramer; forms heterotetrameric Gn-Gc spikes in the pre-fusion conformation. Interacts (via C-terminus) with the nucleoprotein. Interacts with host TUFM; this interaction contributes to the virus-induced degradation of mitochondria by autophagy, which leads to degradation of host MAVS and inhibition of type I interferon (IFN) responses. Interacts with host MAP1LC3B; this interaction contributes to the virus-induced degradation of mitochondria by autophagy, which leads to degradation of host MAVS and inhibition of type I interferon (IFN) responses. In terms of assembly, homodimer. Homotetramer; forms heterotetrameric Gn-Gc spikes in the pre-fusion conformation. Homotrimer; forms homotrimer in the post-fusion conformation at acidic pH. Interacts (via C-terminus) with the nucleoprotein. Envelope polyprotein precursor is quickly cleaved in vivo just after synthesis, presumably by host signal peptidase.

The protein localises to the virion membrane. It localises to the host cell surface. Its subcellular location is the host Golgi apparatus membrane. The protein resides in the host endoplasmic reticulum membrane. It is found in the host mitochondrion. Forms homotetramers with glycoprotein C at the surface of the virion. Attaches the virion to host cell receptors including integrin ITGAV/ITGB3. This attachment induces virion internalization predominantly through clathrin-dependent endocytosis. Mediates the assembly and budding of infectious virus particles through its interaction with the nucleocapsid protein and the viral genome. May dysregulate normal immune and endothelial cell responses through an ITAM motif. Translocates to mitochondria, binds to host TUFM and recruits MAP1LC3B. These interactions induce mitochondrial autophagy and therefore destruction of host MAVS leading to inhibition of type I interferon (IFN) responses. Concomitant breakdown of glycoprotein N is apparently prevented by the nucleoprotein that may inhibit Gn-stimulated autophagosome-lysosome fusion. Interacts with the viral genomic RNA. Its function is as follows. Forms homotetramers with glycoprotein N at the surface of the virion. Attaches the virion to host cell receptors including integrin ITGAV/ITGB3. This attachment induces virion internalization predominantly through clathrin-dependent endocytosis. Class II fusion protein that promotes fusion of viral membrane with host endosomal membrane after endocytosis of the virion. This is Envelopment polyprotein (GP) from Homo sapiens (Human).